The following is a 576-amino-acid chain: Probable DNA ligase (576 aa).

E235 serves as a coordination point for ATP. The active-site N6-AMP-lysine intermediate is K237. The ATP site is built by R242, R257, E285, F324, R422, and K428.

It belongs to the ATP-dependent DNA ligase family. Mg(2+) is required as a cofactor.

It carries out the reaction ATP + (deoxyribonucleotide)n-3'-hydroxyl + 5'-phospho-(deoxyribonucleotide)m = (deoxyribonucleotide)n+m + AMP + diphosphate.. Functionally, DNA ligase that seals nicks in double-stranded DNA during DNA replication, DNA recombination and DNA repair. This chain is Probable DNA ligase, found in Koribacter versatilis (strain Ellin345).